Consider the following 415-residue polypeptide: Mannosylglycerate hydrolase (415 aa).

Substrate-binding positions include Tyr23, 27 to 30, Tyr76, Gln98, and Gly158; that span reads WLWD. Asp160 acts as the Proton donor in catalysis. Residues Arg193 and 344–345 each bind substrate; that span reads YW. The active-site Proton acceptor is the Glu388.

This sequence belongs to the glycosyl hydrolase 63 family. As to quaternary structure, homotetramer in solution.

It catalyses the reaction (2R)-2-O-(alpha-D-mannosyl)-glycerate + H2O = D-mannose + (R)-glycerate. The catalysed reaction is (2R)-2-O-(alpha-D-glucopyranosyl)-glycerate + H2O = (R)-glycerate + D-glucose. With respect to regulation, activity is not stimulated by divalent cations and not affected in the presence of EDTA. In terms of biological role, hydrolase that catalyzes the hydrolysis of mannosylglycerate (MG), a solute produced in response to osmotic stress in thermophiles, into mannose and glycerate. Can also hydrolyze glucosylglycerate (GG) to glucose and glycerate, with similar catalytic efficiency. Is highly specific for MG and GG, and cannot use mannosylglyceramide (MGA), glucosylglycerol, mannosylglucosylglycerate (MGG), glucosylglucosylglycerate (GGG) or trehalose as substrates. This chain is Mannosylglycerate hydrolase, found in Thermus thermophilus (strain ATCC BAA-163 / DSM 7039 / HB27).